The chain runs to 61 residues: Small ribosomal subunit protein uS14 (61 aa).

C24, C27, C40, and C43 together coordinate Zn(2+).

Belongs to the universal ribosomal protein uS14 family. Zinc-binding uS14 subfamily. As to quaternary structure, part of the 30S ribosomal subunit. Contacts proteins S3 and S10. It depends on Zn(2+) as a cofactor.

Functionally, binds 16S rRNA, required for the assembly of 30S particles and may also be responsible for determining the conformation of the 16S rRNA at the A site. The sequence is that of Small ribosomal subunit protein uS14 from Symbiobacterium thermophilum (strain DSM 24528 / JCM 14929 / IAM 14863 / T).